A 444-amino-acid chain; its full sequence is Cobyrinate a,c-diamide synthase (444 aa).

The GATase cobBQ-type domain maps to 250–438; sequence IIAIAQDRAF…PHIHFFGSYK (189 aa). The Nucleophile role is filled by cysteine 332.

It belongs to the CobB/CbiA family. Requires Mg(2+) as cofactor.

It catalyses the reaction cob(II)yrinate + 2 L-glutamine + 2 ATP + 2 H2O = cob(II)yrinate a,c diamide + 2 L-glutamate + 2 ADP + 2 phosphate + 2 H(+). It functions in the pathway cofactor biosynthesis; adenosylcobalamin biosynthesis; cob(II)yrinate a,c-diamide from sirohydrochlorin (anaerobic route): step 10/10. Its function is as follows. Catalyzes the ATP-dependent amidation of the two carboxylate groups at positions a and c of cobyrinate, using either L-glutamine or ammonia as the nitrogen source. The protein is Cobyrinate a,c-diamide synthase of Fusobacterium nucleatum subsp. nucleatum (strain ATCC 25586 / DSM 15643 / BCRC 10681 / CIP 101130 / JCM 8532 / KCTC 2640 / LMG 13131 / VPI 4355).